Consider the following 172-residue polypeptide: Adenine phosphoribosyltransferase (172 aa).

Belongs to the purine/pyrimidine phosphoribosyltransferase family. In terms of assembly, homodimer.

The protein localises to the cytoplasm. It catalyses the reaction AMP + diphosphate = 5-phospho-alpha-D-ribose 1-diphosphate + adenine. It participates in purine metabolism; AMP biosynthesis via salvage pathway; AMP from adenine: step 1/1. In terms of biological role, catalyzes a salvage reaction resulting in the formation of AMP, that is energically less costly than de novo synthesis. The polypeptide is Adenine phosphoribosyltransferase (Clostridium acetobutylicum (strain ATCC 824 / DSM 792 / JCM 1419 / IAM 19013 / LMG 5710 / NBRC 13948 / NRRL B-527 / VKM B-1787 / 2291 / W)).